The chain runs to 389 residues: Pre-mRNA-splicing factor PRP46 (389 aa).

WD repeat units follow at residues 83–123 (AHQG…LKAV), 126–165 (GHVLGIRSLCISKRHPYLFSGGEDKSLRCWDLERSNSDAG), 173–212 (GHLGGVYSIGLHPELDVLFSGGKDCVVRVWDIRSRVEAMT), 215–254 (GHTNDITSIETDYNDPQVITSSMDGTIRLWDLRKSKTELL), 257–298 (NHSK…NEFG), 308–347 (DNSRIINTLAINPVTNTLFSGYDDGKLEFYNYTTGNLQQS), and 356–389 (PEQSAIYASTFDMSGLRLLTCHGDKSIRIWGTSY).

It belongs to the WD repeat PRL1/PRL2 family. Associated with the spliceosome.

The protein resides in the cytoplasm. The protein localises to the nucleus. In terms of biological role, involved in pre-mRNA splicing and required for cell cycle progression at G2/M. The sequence is that of Pre-mRNA-splicing factor PRP46 (PRP46) from Candida albicans (strain SC5314 / ATCC MYA-2876) (Yeast).